A 292-amino-acid chain; its full sequence is GTP cyclohydrolase FolE2 (292 aa).

The protein belongs to the GTP cyclohydrolase IV family.

The catalysed reaction is GTP + H2O = 7,8-dihydroneopterin 3'-triphosphate + formate + H(+). It participates in cofactor biosynthesis; 7,8-dihydroneopterin triphosphate biosynthesis; 7,8-dihydroneopterin triphosphate from GTP: step 1/1. In terms of biological role, converts GTP to 7,8-dihydroneopterin triphosphate. This is GTP cyclohydrolase FolE2 from Staphylococcus carnosus (strain TM300).